The sequence spans 173 residues: Phosphopantetheine adenylyltransferase (173 aa).

S9 contributes to the substrate binding site. ATP is bound by residues 9 to 10 (SF) and H17. Substrate contacts are provided by K41, T73, and R87. ATP-binding positions include 88 to 90 (GVR), E98, and 123 to 129 (YQYLSSS).

Belongs to the bacterial CoaD family. Homohexamer. It depends on Mg(2+) as a cofactor.

The protein localises to the cytoplasm. It catalyses the reaction (R)-4'-phosphopantetheine + ATP + H(+) = 3'-dephospho-CoA + diphosphate. It participates in cofactor biosynthesis; coenzyme A biosynthesis; CoA from (R)-pantothenate: step 4/5. Functionally, reversibly transfers an adenylyl group from ATP to 4'-phosphopantetheine, yielding dephospho-CoA (dPCoA) and pyrophosphate. This is Phosphopantetheine adenylyltransferase from Limosilactobacillus fermentum (strain NBRC 3956 / LMG 18251) (Lactobacillus fermentum).